Here is a 119-residue protein sequence, read N- to C-terminus: U-scoloptoxin(16)-Er11a (119 aa).

A signal peptide spans 1–19; it reads MKSWTAAVLSLGLIYLSIS.

This sequence belongs to the scoloptoxin-16 family. Post-translationally, contains 4 disulfide bonds. Expressed by the venom gland.

It is found in the secreted. The chain is U-scoloptoxin(16)-Er11a from Ethmostigmus rubripes (Giant centipede).